Consider the following 322-residue polypeptide: 4-diphosphocytidyl-2-C-methyl-D-erythritol kinase (322 aa).

The active site involves Lys25. 110–120 (PVAGGMAGGSA) provides a ligand contact to ATP. The active site involves Asp152.

The protein belongs to the GHMP kinase family. IspE subfamily.

The enzyme catalyses 4-CDP-2-C-methyl-D-erythritol + ATP = 4-CDP-2-C-methyl-D-erythritol 2-phosphate + ADP + H(+). Its pathway is isoprenoid biosynthesis; isopentenyl diphosphate biosynthesis via DXP pathway; isopentenyl diphosphate from 1-deoxy-D-xylulose 5-phosphate: step 3/6. Catalyzes the phosphorylation of the position 2 hydroxy group of 4-diphosphocytidyl-2C-methyl-D-erythritol. The polypeptide is 4-diphosphocytidyl-2-C-methyl-D-erythritol kinase (Mycolicibacterium gilvum (strain PYR-GCK) (Mycobacterium gilvum (strain PYR-GCK))).